Here is a 535-residue protein sequence, read N- to C-terminus: Succinate-semialdehyde dehydrogenase, mitochondrial (535 aa).

The transit peptide at 1-47 directs the protein to the mitochondrion; sequence MATCIWLRSCGARRLGSTFPGCRLRPRAGGLVPASGPAPGPAQLRCY. Lys126 is modified (N6-acetyllysine; alternate). The residue at position 126 (Lys126) is an N6-succinyllysine; alternate. N6-succinyllysine occurs at positions 135 and 184. Residues Arg213 and 228–231 contribute to the NAD(+) site; that span reads KPAE. Arg213 is a binding site for substrate. Lys265 bears the N6-acetyllysine; alternate mark. Residue Lys265 is modified to N6-succinyllysine; alternate. NAD(+) is bound at residue 284-289; it reads GSTTTG. The active-site Proton acceptor is the Glu306. Position 334 (Arg334) interacts with substrate. Cys340 functions as the Nucleophile in the catalytic mechanism. A disulfide bridge links Cys340 with Cys342. Residue Lys365 is modified to N6-acetyllysine. Lys402 carries the N6-succinyllysine modification. Lys411 carries the N6-acetyllysine modification. Ser498 contributes to the substrate binding site. Ser499 is subject to Phosphoserine.

The protein belongs to the aldehyde dehydrogenase family. Homotetramer.

The protein resides in the mitochondrion. The enzyme catalyses succinate semialdehyde + NAD(+) + H2O = succinate + NADH + 2 H(+). The protein operates within amino-acid degradation; 4-aminobutanoate degradation. Redox-regulated. Inhibited under oxydizing conditions. Catalyzes one step in the degradation of the inhibitory neurotransmitter gamma-aminobutyric acid (GABA). The protein is Succinate-semialdehyde dehydrogenase, mitochondrial (ALDH5A1) of Pan troglodytes (Chimpanzee).